Consider the following 309-residue polypeptide: Olfactory receptor 4A47 (309 aa).

The Extracellular portion of the chain corresponds to 1–23 (MEPRKNVTDFVLLGFTQNPKEQK). An N-linked (GlcNAc...) asparagine glycan is attached at asparagine 6. Residues 24 to 47 (VLFVMFLLFYILTMVGNLLIVVTV) form a helical membrane-spanning segment. The Cytoplasmic segment spans residues 48–55 (TVSETLGS). Residues 56-77 (PMYFFLAGLSFIDIIYSSSISP) traverse the membrane as a helical segment. Residues 78 to 98 (RLISGLFFGNNSISFQSCMAQ) are Extracellular-facing. An N-linked (GlcNAc...) asparagine glycan is attached at asparagine 87. A disulfide bridge links cysteine 95 with cysteine 187. A helical transmembrane segment spans residues 99-118 (LFIEHIFGGSEVFLLLVMAY). Residues 119–137 (DCYVAICKPLHYLVIMRQW) lie on the Cytoplasmic side of the membrane. A helical membrane pass occupies residues 138–156 (VCVVLLVVSWVGGFLHSVF). Residues 157–193 (QLSIIYGLPFCGPNVIDHFFCDMYPLLKLVCTDTHAI) are Extracellular-facing. The chain crosses the membrane as a helical span at residues 194 to 217 (GLLVVANGGLACTIVFLLLLISYG). Over 218-233 (VILHSLKNLSQKGRQK) the chain is Cytoplasmic. Residues 234–256 (ALSTCSSHMTVVVFFFVPCIFMY) traverse the membrane as a helical segment. Residues 257-267 (ARPARTFPIDK) lie on the Extracellular side of the membrane. Residues 268 to 287 (SVSVFYTVITPMLNPLIYTL) form a helical membrane-spanning segment. Residues 288 to 309 (RNSEMTSAMKKLWRRDLISSST) are Cytoplasmic-facing.

This sequence belongs to the G-protein coupled receptor 1 family.

The protein localises to the cell membrane. Its function is as follows. Odorant receptor. The sequence is that of Olfactory receptor 4A47 (OR4A47) from Homo sapiens (Human).